The chain runs to 376 residues: Deoxyuridine 5'-triphosphate nucleotidohydrolase (376 aa).

Belongs to the dUTPase family. Requires Mg(2+) as cofactor.

The enzyme catalyses dUTP + H2O = dUMP + diphosphate + H(+). Functionally, involved in nucleotide metabolism: produces dUMP, the immediate precursor of thymidine nucleotides and decreases the intracellular concentration of dUTP to avoid uracil incorporation into viral DNA. This Human herpesvirus 6A (strain GS) (HHV-6 variant A) protein is Deoxyuridine 5'-triphosphate nucleotidohydrolase.